Reading from the N-terminus, the 167-residue chain is Thiol peroxidase (167 aa).

The Thioredoxin domain maps to 18–167; sequence VKVGDQAPDF…PIEAAKALVK (150 aa). Cysteine 60 serves as the catalytic Cysteine sulfenic acid (-SOH) intermediate. Cysteine 60 and cysteine 94 are oxidised to a cystine.

This sequence belongs to the peroxiredoxin family. Tpx subfamily. As to quaternary structure, homodimer.

It catalyses the reaction a hydroperoxide + [thioredoxin]-dithiol = an alcohol + [thioredoxin]-disulfide + H2O. Thiol-specific peroxidase that catalyzes the reduction of hydrogen peroxide and organic hydroperoxides to water and alcohols, respectively. Plays a role in cell protection against oxidative stress by detoxifying peroxides. This Bacillus subtilis (strain 168) protein is Thiol peroxidase.